The primary structure comprises 147 residues: Large ribosomal subunit protein uL15 (147 aa).

The tract at residues 1–62 (MKLHELKPAQ…GQQPLSRRMP (62 aa)) is disordered. Gly residues-rich tracts occupy residues 21–31 (RGIGSGTGKTS) and 42–52 (AGGGVRPGFEG).

This sequence belongs to the universal ribosomal protein uL15 family. As to quaternary structure, part of the 50S ribosomal subunit.

Its function is as follows. Binds to the 23S rRNA. This is Large ribosomal subunit protein uL15 from Desulfitobacterium hafniense (strain DSM 10664 / DCB-2).